A 217-amino-acid chain; its full sequence is Large ribosomal subunit protein uL1 (217 aa).

The protein belongs to the universal ribosomal protein uL1 family. In terms of assembly, part of the 50S ribosomal subunit.

In terms of biological role, binds directly to 23S rRNA. The L1 stalk is quite mobile in the ribosome, and is involved in E site tRNA release. Protein L1 is also a translational repressor protein, it controls the translation of the L11 operon by binding to its mRNA. The protein is Large ribosomal subunit protein uL1 of Wolbachia pipientis wMel.